Reading from the N-terminus, the 266-residue chain is Large ribosomal subunit protein eL8 (266 aa).

Residues Lys11, Lys20, and Lys21 each participate in a glycyl lysine isopeptide (Lys-Gly) (interchain with G-Cter in SUMO2) cross-link. Lys34 carries the post-translational modification N6-acetyllysine. Residue Lys48 forms a Glycyl lysine isopeptide (Lys-Gly) (interchain with G-Cter in SUMO2) linkage. Lys97 is subject to N6-acetyllysine; alternate. Residue Lys97 forms a Glycyl lysine isopeptide (Lys-Gly) (interchain with G-Cter in SUMO2); alternate linkage. Lys125 is covalently cross-linked (Glycyl lysine isopeptide (Lys-Gly) (interchain with G-Cter in SUMO2)). Lys217 is subject to N6-acetyllysine. Residue Lys245 forms a Glycyl lysine isopeptide (Lys-Gly) (interchain with G-Cter in SUMO2) linkage.

This sequence belongs to the eukaryotic ribosomal protein eL8 family. In terms of assembly, component of the large ribosomal subunit. Interacts with CRY1. Interacts with DICER1, AGO2, TARBP2, MOV10 and EIF6; they form a large RNA-induced silencing complex (RISC).

The protein localises to the cytoplasm. Its function is as follows. Component of the large ribosomal subunit. The ribosome is a large ribonucleoprotein complex responsible for the synthesis of proteins in the cell. This Mus musculus (Mouse) protein is Large ribosomal subunit protein eL8 (Rpl7a).